Consider the following 78-residue polypeptide: Exodeoxyribonuclease 7 small subunit (78 aa).

Belongs to the XseB family. In terms of assembly, heterooligomer composed of large and small subunits.

It is found in the cytoplasm. The catalysed reaction is Exonucleolytic cleavage in either 5'- to 3'- or 3'- to 5'-direction to yield nucleoside 5'-phosphates.. In terms of biological role, bidirectionally degrades single-stranded DNA into large acid-insoluble oligonucleotides, which are then degraded further into small acid-soluble oligonucleotides. The protein is Exodeoxyribonuclease 7 small subunit of Pediococcus pentosaceus (strain ATCC 25745 / CCUG 21536 / LMG 10740 / 183-1w).